We begin with the raw amino-acid sequence, 91 residues long: UPF0250 protein NGK_1021 (91 aa).

The protein belongs to the UPF0250 family.

The sequence is that of UPF0250 protein NGK_1021 from Neisseria gonorrhoeae (strain NCCP11945).